Reading from the N-terminus, the 347-residue chain is UPF0284 protein YN1551_0030 (347 aa).

The protein belongs to the UPF0284 family.

This chain is UPF0284 protein YN1551_0030, found in Saccharolobus islandicus (strain Y.N.15.51 / Yellowstone #2) (Sulfolobus islandicus).